A 131-amino-acid chain; its full sequence is Protein SOB FIVE-LIKE 4 (131 aa).

Disordered stretches follow at residues 1–21 and 40–131; these read MDKEECSSSESGWTTYLSSPI and IYNY…YRMK. Residues 8–18 are compositionally biased toward polar residues; it reads SSESGWTTYLS. Positions 11–16 match the SOFL-A motif; that stretch reads SGWTTY. Residues 46–58 are compositionally biased toward basic and acidic residues; sequence KVEHEEERNKDSD. Positions 60–69 match the SOFL-B motif; it reads SMASDASSGP. The segment covering 79-109 has biased composition (basic and acidic residues); that stretch reads KALDLKNGKNEGNSKSKNDDDHHNHYHDGKK. A Nuclear localization signal motif is present at residues 107–114; it reads GKKTSNSY. Positions 114–131 are enriched in basic residues; sequence YRKKDKKKRENKSTYRMK.

The protein belongs to the SOFL plant protein family. As to expression, expressed, at low levels, in seedlings, roots, flowers and siliques.

It localises to the cytoplasm. The protein resides in the nucleus. Its function is as follows. Involved in cytokinin-mediated development. In Arabidopsis thaliana (Mouse-ear cress), this protein is Protein SOB FIVE-LIKE 4.